A 716-amino-acid chain; its full sequence is Fatty acid oxidation complex subunit alpha (716 aa).

Residues 1–189 (MIYQSPTIQV…KVGAIDAVVA (189 aa)) form an enoyl-CoA hydratase/isomerase region. Aspartate 296 provides a ligand contact to substrate. A 3-hydroxyacyl-CoA dehydrogenase region spans residues 311–716 (KDVNQAAVLG…AANNGSYYQA (406 aa)). Residues methionine 324, aspartate 343, 400–402 (VVE), lysine 407, and serine 429 contribute to the NAD(+) site. Histidine 450 (for 3-hydroxyacyl-CoA dehydrogenase activity) is an active-site residue. Asparagine 453 lines the NAD(+) pocket. Residues asparagine 500 and tyrosine 660 each coordinate substrate.

This sequence in the N-terminal section; belongs to the enoyl-CoA hydratase/isomerase family. In the C-terminal section; belongs to the 3-hydroxyacyl-CoA dehydrogenase family. As to quaternary structure, heterotetramer of two alpha chains (FadB) and two beta chains (FadA).

It catalyses the reaction a (3S)-3-hydroxyacyl-CoA + NAD(+) = a 3-oxoacyl-CoA + NADH + H(+). The catalysed reaction is a (3S)-3-hydroxyacyl-CoA = a (2E)-enoyl-CoA + H2O. The enzyme catalyses a 4-saturated-(3S)-3-hydroxyacyl-CoA = a (3E)-enoyl-CoA + H2O. It carries out the reaction (3S)-3-hydroxybutanoyl-CoA = (3R)-3-hydroxybutanoyl-CoA. It catalyses the reaction a (3Z)-enoyl-CoA = a 4-saturated (2E)-enoyl-CoA. The catalysed reaction is a (3E)-enoyl-CoA = a 4-saturated (2E)-enoyl-CoA. It functions in the pathway lipid metabolism; fatty acid beta-oxidation. Involved in the aerobic and anaerobic degradation of long-chain fatty acids via beta-oxidation cycle. Catalyzes the formation of 3-oxoacyl-CoA from enoyl-CoA via L-3-hydroxyacyl-CoA. It can also use D-3-hydroxyacyl-CoA and cis-3-enoyl-CoA as substrate. This Shewanella frigidimarina (strain NCIMB 400) protein is Fatty acid oxidation complex subunit alpha.